The chain runs to 416 residues: 3-isopropylmalate dehydratase large subunit (416 aa).

[4Fe-4S] cluster contacts are provided by C299, C357, and C360.

The protein belongs to the aconitase/IPM isomerase family. LeuC type 2 subfamily. Heterodimer of LeuC and LeuD. [4Fe-4S] cluster is required as a cofactor.

It catalyses the reaction (2R,3S)-3-isopropylmalate = (2S)-2-isopropylmalate. It participates in amino-acid biosynthesis; L-leucine biosynthesis; L-leucine from 3-methyl-2-oxobutanoate: step 2/4. Catalyzes the isomerization between 2-isopropylmalate and 3-isopropylmalate, via the formation of 2-isopropylmaleate. The sequence is that of 3-isopropylmalate dehydratase large subunit from Saccharolobus solfataricus (strain ATCC 35092 / DSM 1617 / JCM 11322 / P2) (Sulfolobus solfataricus).